The following is a 642-amino-acid chain: 2-oxoacid:ferredoxin oxidoreductase 2, subunit alpha (642 aa).

Positions 263–267 (YPITP) match the YPITP motif motif. Residues T266 and R356 each coordinate substrate.

As to quaternary structure, heterodimer composed of an alpha and a beta subunit.

It carries out the reaction a 2-oxocarboxylate + 2 oxidized [2Fe-2S]-[ferredoxin] + CoA = an acyl-CoA + 2 reduced [2Fe-2S]-[ferredoxin] + CO2 + H(+). Its function is as follows. Catalyzes the coenzyme A-dependent oxidative decarboxylation of different 2-oxoacids such as pyruvate, 2-oxobutyrate, glyoxylate and 2-oxoglutarate to form their CoA derivatives. This Aeropyrum pernix (strain ATCC 700893 / DSM 11879 / JCM 9820 / NBRC 100138 / K1) protein is 2-oxoacid:ferredoxin oxidoreductase 2, subunit alpha.